The primary structure comprises 353 residues: Mitochondrial ubiquitin ligase activator of nfkb 1 (353 aa).

Over 1-8 the chain is Cytoplasmic; sequence MENGGRPS. Residues 9–29 traverse the membrane as a helical segment; it reads VGQVILLTTSSAITALFYSIY. Residues 30–239 are Mitochondrial intermembrane-facing; sequence RHKYRSVQTL…LLEKQEVQMR (210 aa). A helical membrane pass occupies residues 240–260; that stretch reads WWRILSIVFGVASCITLFFIL. Residues 261–353 lie on the Cytoplasmic side of the membrane; it reads RRKYRHYKEK…IDRIVPLYNS (93 aa). The RING-type zinc finger occupies 303-341; sequence CSICLSTEKSCVFLECGHVCSCISCYQALPSPKKCPICR.

As to quaternary structure, homooligomer.

The protein resides in the mitochondrion outer membrane. It catalyses the reaction S-ubiquitinyl-[E2 ubiquitin-conjugating enzyme]-L-cysteine + [acceptor protein]-L-lysine = [E2 ubiquitin-conjugating enzyme]-L-cysteine + N(6)-ubiquitinyl-[acceptor protein]-L-lysine.. It functions in the pathway protein modification; protein ubiquitination. E3 ubiquitin-protein ligase that plays a role in the control of mitochondrial morphology. Promotes mitochondrial fragmentation and influences mitochondrial localization. Inhibits cell growth. E3 ubiquitin ligases accept ubiquitin from an E2 ubiquitin-conjugating enzyme in the form of a thioester and then directly transfer the ubiquitin to targeted substrates. This is Mitochondrial ubiquitin ligase activator of nfkb 1 (mul1) from Xenopus laevis (African clawed frog).